The sequence spans 486 residues: Endoglucanase 16 (486 aa).

Residues 1 to 30 (MANYKGRGNVMIRSMLLGLYGIINIVCVNG) form the signal peptide. Asn29 is a glycosylation site (N-linked (GlcNAc...) asparagine). Asp87 acts as the Nucleophile in catalysis. Residues His407, Asp458, and Glu467 contribute to the active site.

This sequence belongs to the glycosyl hydrolase 9 (cellulase E) family.

It localises to the secreted. It carries out the reaction Endohydrolysis of (1-&gt;4)-beta-D-glucosidic linkages in cellulose, lichenin and cereal beta-D-glucans.. This chain is Endoglucanase 16, found in Arabidopsis thaliana (Mouse-ear cress).